We begin with the raw amino-acid sequence, 273 residues long: 4-hydroxybenzoate octaprenyltransferase (273 aa).

A run of 8 helical transmembrane segments spans residues 7–27 (IGIYLLLWPTLWALFLASEGF), 30–50 (LKLLLIFVLGVVLMRSAGCVI), 83–103 (FFVLLIMLAFLLVLLTNWLTI), 122–142 (WTYFPQFVLGLAFAMSVLMAF), 146–166 (LNEIPITAWYVFAATVIWTVI), 197–217 (LIIGILQIIFLLILIKISNVF), 221–241 (ISYHITLLLVTLLMIYHQYLI), and 253–273 (FLHNNYIGMVIFIGIVLSVGL).

Belongs to the UbiA prenyltransferase family. The cofactor is Mg(2+).

Its subcellular location is the cell inner membrane. It carries out the reaction all-trans-octaprenyl diphosphate + 4-hydroxybenzoate = 4-hydroxy-3-(all-trans-octaprenyl)benzoate + diphosphate. It functions in the pathway cofactor biosynthesis; ubiquinone biosynthesis. Its function is as follows. Catalyzes the prenylation of para-hydroxybenzoate (PHB) with an all-trans polyprenyl group. Mediates the second step in the final reaction sequence of ubiquinone-8 (UQ-8) biosynthesis, which is the condensation of the polyisoprenoid side chain with PHB, generating the first membrane-bound Q intermediate 3-octaprenyl-4-hydroxybenzoate. The polypeptide is 4-hydroxybenzoate octaprenyltransferase (Vesicomyosocius okutanii subsp. Calyptogena okutanii (strain HA)).